Reading from the N-terminus, the 932-residue chain is DNA mismatch repair protein MutS (932 aa).

ATP is bound at residue 620–627; it reads GPNMAGKS.

Belongs to the DNA mismatch repair MutS family.

Its function is as follows. This protein is involved in the repair of mismatches in DNA. It is possible that it carries out the mismatch recognition step. This protein has a weak ATPase activity. This Lachnoclostridium phytofermentans (strain ATCC 700394 / DSM 18823 / ISDg) (Clostridium phytofermentans) protein is DNA mismatch repair protein MutS.